Here is a 455-residue protein sequence, read N- to C-terminus: Phosphoglucosamine mutase (455 aa).

Residue Ser-104 is the Phosphoserine intermediate of the active site. Mg(2+) contacts are provided by Ser-104, Asp-243, Asp-245, and Asp-247. Phosphoserine is present on Ser-104.

The protein belongs to the phosphohexose mutase family. Mg(2+) serves as cofactor. Post-translationally, activated by phosphorylation.

It carries out the reaction alpha-D-glucosamine 1-phosphate = D-glucosamine 6-phosphate. Its function is as follows. Catalyzes the conversion of glucosamine-6-phosphate to glucosamine-1-phosphate. This Synechococcus sp. (strain CC9311) protein is Phosphoglucosamine mutase.